The sequence spans 492 residues: Catalase-1 (492 aa).

Catalysis depends on residues His-65 and Asn-138. Tyr-348 contacts heme.

The protein belongs to the catalase family. As to quaternary structure, homotetramer. Requires heme as cofactor.

It is found in the peroxisome. The protein resides in the glyoxysome. It catalyses the reaction 2 H2O2 = O2 + 2 H2O. Its function is as follows. Occurs in almost all aerobically respiring organisms and serves to protect cells from the toxic effects of hydrogen peroxide. This chain is Catalase-1 (CAT1), found in Triticum aestivum (Wheat).